We begin with the raw amino-acid sequence, 103 residues long: Histone H4 (103 aa).

Residues 1–14 (MSGRGKGGKGLGKG) are compositionally biased toward gly residues. A disordered region spans residues 1–20 (MSGRGKGGKGLGKGGAKRHR). Ser2 carries the post-translational modification N-acetylserine. 2 positions are modified to N6-acetyl-N6-methyllysine; alternate: Lys6 and Lys13. Lys17 is subject to N6-acetyllysine. Residues 17 to 21 (KRHRK) mediate DNA binding. Position 21 is an N6-methyllysine (Lys21).

This sequence belongs to the histone H4 family. The nucleosome is a histone octamer containing two molecules each of H2A, H2B, H3 and H4 assembled in one H3-H4 heterotetramer and two H2A-H2B heterodimers. The octamer wraps approximately 147 bp of DNA.

It is found in the nucleus. It localises to the chromosome. Its function is as follows. Core component of nucleosome. Nucleosomes wrap and compact DNA into chromatin, limiting DNA accessibility to the cellular machineries which require DNA as a template. Histones thereby play a central role in transcription regulation, DNA repair, DNA replication and chromosomal stability. DNA accessibility is regulated via a complex set of post-translational modifications of histones, also called histone code, and nucleosome remodeling. This is Histone H4 from Holothuria tubulosa (Tubular sea cucumber).